Consider the following 551-residue polypeptide: Glucans biosynthesis protein D (551 aa).

Positions 1–32 form a signal peptide, tat-type signal; sequence MDRRRFIKGSMAMAAVCGTSGIASLFSQAAFA.

Belongs to the OpgD/OpgG family. Post-translationally, predicted to be exported by the Tat system. The position of the signal peptide cleavage has not been experimentally proven.

Its subcellular location is the periplasm. Its pathway is glycan metabolism; osmoregulated periplasmic glucan (OPG) biosynthesis. Probably involved in the control of the structural glucose backbone of osmoregulated periplasmic glucans (OPGs). The protein is Glucans biosynthesis protein D of Escherichia coli O9:H4 (strain HS).